We begin with the raw amino-acid sequence, 134 residues long: Cytochrome b (134 aa).

The next 3 helical transmembrane spans lie at 33–53 (FGSL…FLAM), 77–98 (WLLR…YLHV), and 113–133 (WNIG…GYVL). Heme b is bound by residues H83 and H97.

Belongs to the cytochrome b family. The cytochrome bc1 complex contains 11 subunits: 3 respiratory subunits (MT-CYB, CYC1 and UQCRFS1), 2 core proteins (UQCRC1 and UQCRC2) and 6 low-molecular weight proteins (UQCRH/QCR6, UQCRB/QCR7, UQCRQ/QCR8, UQCR10/QCR9, UQCR11/QCR10 and a cleavage product of UQCRFS1). This cytochrome bc1 complex then forms a dimer. Heme b serves as cofactor.

It is found in the mitochondrion inner membrane. Functionally, component of the ubiquinol-cytochrome c reductase complex (complex III or cytochrome b-c1 complex) that is part of the mitochondrial respiratory chain. The b-c1 complex mediates electron transfer from ubiquinol to cytochrome c. Contributes to the generation of a proton gradient across the mitochondrial membrane that is then used for ATP synthesis. The polypeptide is Cytochrome b (MT-CYB) (Sturnira tildae (Tilda's yellow-shouldered bat)).